Here is a 521-residue protein sequence, read N- to C-terminus: GMP synthase [glutamine-hydrolyzing] (521 aa).

The Glutamine amidotransferase type-1 domain occupies 10 to 204; it reads SLLILDFGSQ…ALGICGCEND (195 aa). Cysteine 87 serves as the catalytic Nucleophile. Active-site residues include histidine 178 and glutamate 180. The GMPS ATP-PPase domain maps to 205–396; the sequence is WNMHNFAEEQ…LGMPREMLMR (192 aa). 232–238 serves as a coordination point for ATP; that stretch reads SGGVDSS.

As to quaternary structure, homodimer.

It catalyses the reaction XMP + L-glutamine + ATP + H2O = GMP + L-glutamate + AMP + diphosphate + 2 H(+). The protein operates within purine metabolism; GMP biosynthesis; GMP from XMP (L-Gln route): step 1/1. Its function is as follows. Catalyzes the synthesis of GMP from XMP. This is GMP synthase [glutamine-hydrolyzing] from Wolinella succinogenes (strain ATCC 29543 / DSM 1740 / CCUG 13145 / JCM 31913 / LMG 7466 / NCTC 11488 / FDC 602W) (Vibrio succinogenes).